The sequence spans 64 residues: Probable spore germination protein GerPD (64 aa).

Required for the formation of functionally normal spores. Could be involved in the establishment of normal spore coat structure and/or permeability, which allows the access of germinants to their receptor. The protein is Probable spore germination protein GerPD (gerPD) of Bacillus cereus.